Consider the following 874-residue polypeptide: MTENSQQPQPAPSTELPTQYTPAEVEGQLYERWVERGYFEADAKSDKPPYTVVIPPPNVTGSLHLGHAFEHTLIDALTRRKRMQGYETLWQPGMDHAGIATQNVVERELGKEGKSRHDLGREAFVERVWQWKSESGGQISGQMRRLGDAVAWSRERFTMDEGLSQAVQTIFKRLYDDELIYRAERIINWCPRCLTAISDIEVEYQDDDGELVSMKYGEGDETIVVATTRAETMLGDTAVAVHPEDERYKHLVGKLIKLPLTDRSIPVVADEHVDPEFGTGAVKVTPAHDPNDFEIGQRHGLPAIAVMDEHAVITAHGPFQGQDRLEARSAIVAALRAEGRIVAEKRPYVHSVGHCSRCKTTIEPRLSMQWWVKVGPLAKAAGDAVRDGKVKIHPQEMEKRYFDWVDNLHDWCISRQLWWGHRIPVWYGPEGEVVCVGPGEEPPSGEGWYQDSDVLDTWFSSGLWPFSTLGWPEQTESLAKFYPNSVLVTGYDILFFWVARMMMFGLYAMDGTPPFHTIALHGMVRDQNGKKMSKSFGNVVNPLDWMDKYGSDALRFTLARGANPGVDVPIGEDWVQGSRNFANKIWNATRFALMNGATVEGPLPDASRMSSTDRWILSRLNSVVAEVDAYYEDYQFAKLSDALFHFAWDEVFDWYVELSKTTFQAGGEAAEVSKRVLGEVLDVTLRLLHPVVPFVTETLWTTLTGGESVVIAEWPTDSGFRDAGAEREIETVQSVITEVRRFRADQGLQPGQRVPARLTLAGSALAAHEAAVRQLLRLQPEGDAFTATATLPVAGVEVALDLSGVIDFAAERKRLAKDLAAAEKEKAQANAKLGNEAFLAKAPDQVVDKIRGRLAKADEDITRITAQLEKLPEA.

The segment at 1-22 (MTENSQQPQPAPSTELPTQYTP) is disordered. The 'HIGH' region signature appears at 57 to 67 (PNVTGSLHLGH). The 'KMSKS' region signature appears at 531–535 (KMSKS). Lys-534 provides a ligand contact to ATP. The stretch at 805–871 (VIDFAAERKR…TRITAQLEKL (67 aa)) forms a coiled coil.

It belongs to the class-I aminoacyl-tRNA synthetase family. ValS type 1 subfamily. As to quaternary structure, monomer.

It is found in the cytoplasm. It catalyses the reaction tRNA(Val) + L-valine + ATP = L-valyl-tRNA(Val) + AMP + diphosphate. Its function is as follows. Catalyzes the attachment of valine to tRNA(Val). As ValRS can inadvertently accommodate and process structurally similar amino acids such as threonine, to avoid such errors, it has a 'posttransfer' editing activity that hydrolyzes mischarged Thr-tRNA(Val) in a tRNA-dependent manner. This Streptomyces coelicolor (strain ATCC BAA-471 / A3(2) / M145) protein is Valine--tRNA ligase.